A 185-amino-acid polypeptide reads, in one-letter code: DNA-directed RNA polymerase 22 kDa subunit (185 aa).

The protein belongs to the poxviridae DNA-directed RNA polymerase 22 kDa subunit family. As to quaternary structure, the DNA-dependent RNA polymerase used for intermediate and late genes expression consists of eight subunits Rpo30/OPG66, Rpo7/OPG90, Rpo22/OPG103, Rpo147/OPG105, Rpo18/OPG119, Rpo19/OPG131, Rpo132/OPG151 and Rpo35/OPG156. The same holoenzyme, with the addition of the transcription-specificity factor OPG109, is used for early gene expression.

It is found in the virion. It catalyses the reaction RNA(n) + a ribonucleoside 5'-triphosphate = RNA(n+1) + diphosphate. Functionally, part of the DNA-dependent RNA polymerase which catalyzes the transcription of viral DNA into RNA using the four ribonucleoside triphosphates as substrates. Responsible for the transcription of early, intermediate and late genes. DNA-dependent RNA polymerase associates with the early transcription factor (ETF), itself composed of OPG118 and OPG133, thereby allowing the early genes transcription. Late transcription, and probably also intermediate transcription, require newly synthesized RNA polymerase. The protein is DNA-directed RNA polymerase 22 kDa subunit (OPG103) of Variola virus (isolate Human/India/Ind3/1967) (VARV).